A 119-amino-acid chain; its full sequence is Thrombin-like enzyme TLBan (119 aa).

The Peptidase S1 domain occupies 1-112 (VIGGDECNIN…YLLWIQSIIA (112 aa)). Catalysis depends on charge relay system residues H40 and D59. A disulfide bond links C54 and C118.

In terms of assembly, monomer. In terms of processing, contains both N-linked carbohydrates and sialic acid. In terms of tissue distribution, expressed by the venom gland.

It is found in the secreted. With respect to regulation, strongly inhibited by PMSF and slightly inhibited by EDTA and soybean trypsin inhibitor. Thrombin-like snake venom serine protease, with high clotting activity in vitro. Also has fibrinogenolytic ability, showing a fast degradation of fibrinogen Aalpha chain (FGA), a slow degradation of Bbeta chain (FGB) and no degradation of gamma chain. Also causes platelet aggregation in platelet rich plasma (PRP) and washed platelet suspension. This Bothrocophias andianus (Andean lancehead) protein is Thrombin-like enzyme TLBan.